We begin with the raw amino-acid sequence, 171 residues long: Transcription antitermination protein NusB (171 aa).

It belongs to the NusB family.

In terms of biological role, involved in transcription antitermination. Required for transcription of ribosomal RNA (rRNA) genes. Binds specifically to the boxA antiterminator sequence of the ribosomal RNA (rrn) operons. This Brucella melitensis biotype 1 (strain ATCC 23456 / CCUG 17765 / NCTC 10094 / 16M) protein is Transcription antitermination protein NusB.